Consider the following 376-residue polypeptide: Actin (376 aa).

The protein belongs to the actin family.

It is found in the cytoplasm. The protein resides in the cytoskeleton. The enzyme catalyses ATP + H2O = ADP + phosphate + H(+). In terms of biological role, actins are highly conserved proteins that are involved in various types of cell motility and are ubiquitously expressed in all eukaryotic cells. The protein is Actin of Trypanosoma cruzi.